The primary structure comprises 80 residues: DinI-like protein Z2083/ECs2153 (80 aa).

This Escherichia coli O157:H7 protein is DinI-like protein Z2083/ECs2153.